An 886-amino-acid chain; its full sequence is Methanogenesis regulatory histidine kinase FilI (886 aa).

The next 2 membrane-spanning stretches (helical) occupy residues 7-27 and 270-290; these read ILAFTGGMILVLALICSTFMC and VVGIFLASLLFGGLILLFLEL. Residues 290-344 form the HAMP domain; that stretch reads LSILMPLATITSSVEAIREQEKGQGSRIPTVGPAELATLAESINEMLDHLESYNQ. The PAS domain occupies 349-419; sequence SEKRFRTIVD…EKDAGVLSGE (71 aa). The 53-residue stretch at 421 to 473 folds into the PAC domain; sequence FVGEVSAHTRAGSSMTFHAVKVPLRDDRGQVTGICGIARDITDIKEAGVELLK. Positions 674–886 constitute a Histidine kinase domain; the sequence is TVSHDLRSPL…TCVLFTLPTP (213 aa). A Phosphohistidine; by autocatalysis modification is found at H677.

Autophosphorylated.

The protein localises to the cell membrane. It carries out the reaction ATP + protein L-histidine = ADP + protein N-phospho-L-histidine.. In terms of biological role, member of the two-component regulatory system FilI/FilRs, which is involved in the regulation of methanogenesis. Autophosphorylates and specifically transfers the phosphoryl group to both FilR1 and FilR2. Could also catalyze the synthesis of the quorum sensing (QS) signal molecules carboxyl-acyl homoserine lactones (AHLs), which regulate the transition of the cellular morphology from short cells to filaments and of the carbon metabolic flux from biomass formation to methane production. The sequence is that of Methanogenesis regulatory histidine kinase FilI from Methanothrix harundinacea (strain 6Ac) (Methanosaeta harundinacea).